The primary structure comprises 153 residues: Small heat shock protein ibp (153 aa).

The sHSP domain occupies 35–153 (KIISDSVPPY…KIQKIQINVK (119 aa)).

Belongs to the small heat shock protein (HSP20) family.

The protein is Small heat shock protein ibp (ibp) of Buchnera aphidicola subsp. Thelaxes suberi.